We begin with the raw amino-acid sequence, 420 residues long: D-tagatose-1,6-bisphosphate aldolase subunit GatZ (420 aa).

Belongs to the GatZ/KbaZ family. GatZ subfamily. In terms of assembly, forms a complex with GatY.

It participates in carbohydrate metabolism; D-tagatose 6-phosphate degradation; D-glyceraldehyde 3-phosphate and glycerone phosphate from D-tagatose 6-phosphate: step 2/2. Its function is as follows. Component of the tagatose-1,6-bisphosphate aldolase GatYZ that is required for full activity and stability of the Y subunit. Could have a chaperone-like function for the proper and stable folding of GatY. When expressed alone, GatZ does not show any aldolase activity. Is involved in the catabolism of galactitol. This chain is D-tagatose-1,6-bisphosphate aldolase subunit GatZ, found in Escherichia coli O17:K52:H18 (strain UMN026 / ExPEC).